We begin with the raw amino-acid sequence, 351 residues long: Porphobilinogen deaminase (351 aa).

Cys-242 carries the post-translational modification S-(dipyrrolylmethanemethyl)cysteine.

It belongs to the HMBS family. As to quaternary structure, monomer. It depends on dipyrromethane as a cofactor.

The enzyme catalyses 4 porphobilinogen + H2O = hydroxymethylbilane + 4 NH4(+). The protein operates within porphyrin-containing compound metabolism; protoporphyrin-IX biosynthesis; coproporphyrinogen-III from 5-aminolevulinate: step 2/4. Its function is as follows. Tetrapolymerization of the monopyrrole PBG into the hydroxymethylbilane pre-uroporphyrinogen in several discrete steps. This chain is Porphobilinogen deaminase, found in Rickettsia rickettsii (strain Sheila Smith).